The sequence spans 401 residues: MVLPKIKEVRAWFTGGATAEKGAGGADYHDQGNHHWIDDHIATPMSKYKQYEQSRQSFGINVLGTLVIEVEADNGQIGFAVSTAGEMGCFIVEKHLNRFIEGKCVSDIKLIHDQMLGATMYYAGSGGLVMNTISCVDLALWDLFGKVVGLPVYKLLGGAVRDEIQFYATGARPDLAKEMGFIGGKMPTHWGPHDGDKGIRKDAAMVAEYREKCGPDFWLMLDCWMSQDVNYATKLAYACAPYNLKWIEECLPPQQYEGYRELKRNAPPGMMVTSGEHHGTLQSFQTLSETGIDIMQPDVGWCGGLTTLVEVAAIAKARGQLVVPHGSSVYSHHAVITFTNTPFSEFLMTSPDCSVLRPQFDPILINEPVPVNGRIHKSVLDKPGFGVELNRDCKLKRPYTH.

Residues H29 and R55 each contribute to the substrate site. The Mg(2+) site is built by D222, E248, and E276. H325 acts as the Proton acceptor in catalysis. E345 provides a ligand contact to substrate.

The protein belongs to the mandelate racemase/muconate lactonizing enzyme family. RhamD subfamily. Homooctamer; tetramer of dimers. Mg(2+) is required as a cofactor.

It catalyses the reaction L-rhamnonate = 2-dehydro-3-deoxy-L-rhamnonate + H2O. Functionally, catalyzes the dehydration of L-rhamnonate to 2-keto-3-deoxy-L-rhamnonate (KDR). This chain is L-rhamnonate dehydratase, found in Tolumonas auensis (strain DSM 9187 / NBRC 110442 / TA 4).